Here is a 1289-residue protein sequence, read N- to C-terminus: MGGCFCIPGERSLPWGPGKEGSSKDPPGLAEDTSSLENKRKCFLPQNMTQDLVLSFCVKSRSRRCVNAALQEAARRRLWALENEAQEVHALFKDLSARLVSVQSQKDQFLITFKTLEEIWKFSTYLNLGYVSICLEHLFFDHTYWLNSRLVDDTEIQVSVDDNHLENIYLGLLLQEGHFFCRAVCSVAQPADKEGEYLTLCKNELISVLSGGESECEAMSLVTGQRGLVPMSALEPLPVPFHQWFLKNHPGICGLPRKRDWTGSGQIGRGRCKALMDYEQEERDELCFLQGESIDVIGFVIPGLQWFIGKSVSSGEVGFVPTRSIDLDSCSPMSKNSAFFSDEERSSLWSPGSERKAECSGFLCSLAHTDITSIYRLSEFEAIQNLQNDLSASQPEGFREARSGGTWMERQTIGSRRSSGSGDSSPEEDELISASSDSYHLPEPEDLDDPELFMDLSTSLEEDDVEHFAPILAFLDHEGYTDHFKSLYDFSFSFLTSSFYSFSEEDELVAYLETSRKWAKMSHMTWAHARLCFLLGRLSIRKTKLSQARVYFEEAIRVLDGAFEDLSLVAALYINLAAIYLRQRLRHKGPTLLEKAGALLACLPDHEFSTKNELDVVTYVLRQGIVVGSGLLEARSCFLAIRLLLSLGRHEEVVPFAERLQLLSGHPPASEATATMLSSLYDKKYLPHLAVASVQKRGPQSARGMSLSIWQAYLVLQNATKILGVPSSNWCEVSALACPTLRQALAACEELSDQDIQRTLCLILSKMYLQHQSPDGSVHYLSQAHVLGKLLGEEEAFESSLCLAWAYLLGRQTEKALEILEPLLCSLRETECVTQRGVVHNLLGLAFEDEGRTSRAAKSYLRALIRAREMGNIRNQAVSMANLGHLTLKSCMQQSARGYLLQAVRLYSELQASKETDMELVQVLLWLGQASVSGHQLVHSRLCYEMALLFGLRHQHLSSQLQVTKSLCHFYSSVSPNPDACITYHEHWLALAQQLRDREMEGQLLESLGQLYRNLNTSRSLRRSLACIKESLRIFVDLGERDKAAEAWLGAGRLHYLMQEDELVELYLQEAIQTALRSEEPSLALKLYEEAGDVFFNGTRHRHRAVEYYRAGAVPLARRMKALRTELRIFNKLTELQISLEGYEKALEFATLAARLSVLTGDQKQELVAFHRLATVYFSLNMYEMAEDCYLKTLSLCPPWLQSPKEALYYAKVYCRLGRLTFYQLKDAHDATEYFLLALAAAVLMGDEELQNTIKNRLDSICQSPLWHSNPFGCSSERARWLSGGSLAL.

2 consecutive SH3 domains span residues 176–239 (EGHF…PLPV) and 267–330 (IGRG…LDSC). The tract at residues 393–442 (SQPEGFREARSGGTWMERQTIGSRRSSGSGDSSPEEDELISASSDSYHLP) is disordered. Residues 414 to 424 (GSRRSSGSGDS) show a composition bias toward low complexity. TPR repeat units follow at residues 529–562 (ARLC…LDGA), 758–791 (RTLC…GKLL), 837–870 (GVVH…AREM), 1002–1038 (GQLL…FVDL), 1085–1119 (LKLY…LARR), 1120–1153 (MKAL…ATLA), 1167–1200 (LVAF…CPPW), and 1211–1245 (AKVY…AVLM).

This is SH3 domain and tetratricopeptide repeat-containing protein 2 (Sh3tc2) from Mus musculus (Mouse).